The sequence spans 563 residues: Arginine--tRNA ligase (563 aa).

A 'HIGH' region motif is present at residues P120–H130.

The protein belongs to the class-I aminoacyl-tRNA synthetase family. Monomer.

The protein localises to the cytoplasm. The catalysed reaction is tRNA(Arg) + L-arginine + ATP = L-arginyl-tRNA(Arg) + AMP + diphosphate. The chain is Arginine--tRNA ligase from Clostridium botulinum (strain Loch Maree / Type A3).